A 428-amino-acid polypeptide reads, in one-letter code: MKRDKVQTLHGEIHIPGDKSISHRSVMFGALAAGTTTVKNFLPGADCLSTIDCFRKMGVHIEQSSSDVVIHGKGIDALKEPESLLDVGNSGTTIRLMLGILAGRPFYSAVAGDESIAKRPMKRVTEPLKKMGAKIDGRAGGEFTPLSVSGASLKGIDYVSPVASAQIKSAVLLAGLQAEGTTTVTEPHKSRDHTERMLSAFGVKLSEDQTSVSIAGGQKLTAADIFVPGDISSAAFFLAAGAMVPNSRIVLKNVGLNPTRTGIIDVLQNMGAKLEIKPSADSGAEPYGDLIIETSSLKAVEIGGDIIPRLIDEIPIIALLATQAEGTTVIKDAAELKVKETNRIDTVVSELRKLGAEIEPTADGMKVYGKQTLKGGAAVSSHGDHRIGMMLGIASCITEEPIEIEHTDAIHVSYPTFFEHLNKLSKKS.

3-phosphoshikimate-binding residues include Lys19, Ser20, and Arg24. Position 19 (Lys19) interacts with phosphoenolpyruvate. 2 residues coordinate phosphoenolpyruvate: Gly91 and Arg119. The 3-phosphoshikimate site is built by Ser164, Gln166, Asp312, and Lys339. A phosphoenolpyruvate-binding site is contributed by Gln166. The active-site Proton acceptor is Asp312. The phosphoenolpyruvate site is built by Arg343 and Arg386.

It belongs to the EPSP synthase family. Monomer.

The protein localises to the cytoplasm. The enzyme catalyses 3-phosphoshikimate + phosphoenolpyruvate = 5-O-(1-carboxyvinyl)-3-phosphoshikimate + phosphate. It functions in the pathway metabolic intermediate biosynthesis; chorismate biosynthesis; chorismate from D-erythrose 4-phosphate and phosphoenolpyruvate: step 6/7. Catalyzes the transfer of the enolpyruvyl moiety of phosphoenolpyruvate (PEP) to the 5-hydroxyl of shikimate-3-phosphate (S3P) to produce enolpyruvyl shikimate-3-phosphate and inorganic phosphate. In Bacillus subtilis (strain 168), this protein is 3-phosphoshikimate 1-carboxyvinyltransferase.